The following is a 2278-amino-acid chain: Protein Ycf2 (2278 aa).

1632 to 1639 lines the ATP pocket; that stretch reads GSIGTGRS.

This sequence belongs to the Ycf2 family.

It is found in the plastid. Its subcellular location is the chloroplast stroma. In terms of biological role, probable ATPase of unknown function. Its presence in a non-photosynthetic plant (Epifagus virginiana) and experiments in tobacco indicate that it has an essential function which is probably not related to photosynthesis. This Solanum tuberosum (Potato) protein is Protein Ycf2.